The sequence spans 200 residues: Small ribosomal subunit protein uS5 (200 aa).

The segment covering 1 to 22 (MAEERGEKRGRRRDRENPRDRD) has biased composition (basic and acidic residues). The segment at 1-26 (MAEERGEKRGRRRDRENPRDRDDESS) is disordered. The 64-residue stretch at 28 to 91 (LVDKLVGINR…EEAKRNLVRI (64 aa)) folds into the S5 DRBM domain.

The protein belongs to the universal ribosomal protein uS5 family. In terms of assembly, part of the 30S ribosomal subunit. Contacts proteins S4 and S8.

In terms of biological role, with S4 and S12 plays an important role in translational accuracy. Its function is as follows. Located at the back of the 30S subunit body where it stabilizes the conformation of the head with respect to the body. In Hyphomonas neptunium (strain ATCC 15444), this protein is Small ribosomal subunit protein uS5.